A 173-amino-acid chain; its full sequence is Nucleoside-triphosphatase THEP1 (173 aa).

Residues 15–22 (GMPGVGKT) and 101–108 (LKIIDEIG) contribute to the ATP site.

This sequence belongs to the THEP1 NTPase family.

It catalyses the reaction a ribonucleoside 5'-triphosphate + H2O = a ribonucleoside 5'-diphosphate + phosphate + H(+). Has nucleotide phosphatase activity towards ATP, GTP, CTP, TTP and UTP. May hydrolyze nucleoside diphosphates with lower efficiency. In Pyrobaculum aerophilum (strain ATCC 51768 / DSM 7523 / JCM 9630 / CIP 104966 / NBRC 100827 / IM2), this protein is Nucleoside-triphosphatase THEP1.